The sequence spans 239 residues: Small ribosomal subunit protein eS6A (239 aa).

Phosphoserine occurs at positions 235 and 236.

The protein belongs to the eukaryotic ribosomal protein eS6 family. In terms of assembly, component of the small ribosomal subunit (SSU). Mature yeast ribosomes consist of a small (40S) and a large (60S) subunit. The 40S small subunit contains 1 molecule of ribosomal RNA (18S rRNA) and at least 33 different proteins. The large 60S subunit contains 3 rRNA molecules (25S, 5.8S and 5S rRNA) and at least 46 different proteins. Interacts with snoRNA U3. uS11 interacts with MPP10. Component of the ribosomal small subunit (SSU) processome composed of at least 40 protein subunits and snoRNA U3. Post-translationally, phosphorylated.

The protein localises to the cytoplasm. Component of the ribosome, a large ribonucleoprotein complex responsible for the synthesis of proteins in the cell. The small ribosomal subunit (SSU) binds messenger RNAs (mRNAs) and translates the encoded message by selecting cognate aminoacyl-transfer RNA (tRNA) molecules. The large subunit (LSU) contains the ribosomal catalytic site termed the peptidyl transferase center (PTC), which catalyzes the formation of peptide bonds, thereby polymerizing the amino acids delivered by tRNAs into a polypeptide chain. The nascent polypeptides leave the ribosome through a tunnel in the LSU and interact with protein factors that function in enzymatic processing, targeting, and the membrane insertion of nascent chains at the exit of the ribosomal tunnel. eS6 is involved in nucleolar processing of pre-18S ribosomal RNA and ribosome assembly. In Schizosaccharomyces pombe (strain 972 / ATCC 24843) (Fission yeast), this protein is Small ribosomal subunit protein eS6A (rps601).